The primary structure comprises 192 residues: Peptidyl-tRNA hydrolase (192 aa).

His17 contributes to the tRNA binding site. The active-site Proton acceptor is His22. Phe68, Asn70, and Asn116 together coordinate tRNA.

This sequence belongs to the PTH family. As to quaternary structure, monomer.

The protein localises to the cytoplasm. It carries out the reaction an N-acyl-L-alpha-aminoacyl-tRNA + H2O = an N-acyl-L-amino acid + a tRNA + H(+). In terms of biological role, hydrolyzes ribosome-free peptidyl-tRNAs (with 1 or more amino acids incorporated), which drop off the ribosome during protein synthesis, or as a result of ribosome stalling. Its function is as follows. Catalyzes the release of premature peptidyl moieties from peptidyl-tRNA molecules trapped in stalled 50S ribosomal subunits, and thus maintains levels of free tRNAs and 50S ribosomes. In Stenotrophomonas maltophilia (strain R551-3), this protein is Peptidyl-tRNA hydrolase.